Here is a 107-residue protein sequence, read N- to C-terminus: MMAADDTMSSKRADNCYKKDRGTMVYTPTDAQQATGKVHEKVYKFFESLYWMYYIHLPYYLMTSFDSFCLHVFFLVVFTLSLFGLLKWVLSLYWATVGYMAYAATGQ.

The helical transmembrane segment at 72 to 92 (VFFLVVFTLSLFGLLKWVLSL) threads the bilayer.

The protein localises to the endoplasmic reticulum membrane. Its function is as follows. Stimulates the activity of serine palmitoyltransferase (SPT). This Eremothecium gossypii (strain ATCC 10895 / CBS 109.51 / FGSC 9923 / NRRL Y-1056) (Yeast) protein is Serine palmitoyltransferase-regulating protein TSC3 (TSC3).